We begin with the raw amino-acid sequence, 151 residues long: UPF0178 protein YaiI (151 aa).

The protein belongs to the UPF0178 family.

The polypeptide is UPF0178 protein YaiI (Salmonella arizonae (strain ATCC BAA-731 / CDC346-86 / RSK2980)).